Here is a 397-residue protein sequence, read N- to C-terminus: MLAQSCCLRLLILLLLFTSICSVSKKSLKYFRNRKLRERRIKLFGTKKTEIQSLLISTWNYTDANLQAWSVLQQGHRRTRQAVIQGCMACQNQRCGRLLAGRSSPDTEGALTLEAAIMDGESLEYGAVAGMDGVRNAILVADAVLKYTKHSVLVGKSATKFARSLGYKEEYLTDARTKNVLKKWSSNGCQPNFWRDVHPSPAENCGPYSPLPEHLHQHPMHQEYAITQGQHDQLAFLALDAEGKFHVASQSSGAQFRIPGRVGDSAVPGAGIYADNEVGGAVASGDGDVLMRHLPAFLAVEAMRAGKDPDQAAEWVVQRLLRHNTEFNGAVVVVNRRGIYAAACAGLDEFHFVVSGGKEYLSMARVERVKCLERENEVIDGGPKGLFPTIPEKQKVP.

An N-terminal signal peptide occupies residues 1–22; sequence MLAQSCCLRLLILLLLFTSICS. Intrachain disulfides connect cysteine 90/cysteine 95, cysteine 189/cysteine 205, and cysteine 344/cysteine 371.

Belongs to the Ntn-hydrolase family.

The polypeptide is L-asparaginase-like protein GD25160 (Drosophila simulans (Fruit fly)).